A 1259-amino-acid polypeptide reads, in one-letter code: Telomerase reverse transcriptase (1259 aa).

A Reverse transcriptase domain is found at 742–1067 (RGEPRKAVRH…SFMPWSGLLI (326 aa)). Residues D837, D999, and D1000 each coordinate Mg(2+).

The protein belongs to the reverse transcriptase family. Telomerase subfamily. In terms of assembly, component of the telomerase ribonucleoprotein complex. As to expression, expressed in shoot apices and immature embryos.

The protein localises to the nucleus. The protein resides in the chromosome. It is found in the telomere. The catalysed reaction is DNA(n) + a 2'-deoxyribonucleoside 5'-triphosphate = DNA(n+1) + diphosphate. Functionally, telomerase is a ribonucleoprotein enzyme essential for the replication of chromosome termini in most eukaryotes. It elongates telomeres. It is a reverse transcriptase that adds simple sequence repeats to chromosome ends by copying a template sequence within the RNA component of the enzyme. The protein is Telomerase reverse transcriptase (TERT) of Oryza sativa subsp. japonica (Rice).